We begin with the raw amino-acid sequence, 256 residues long: uncharacterized protein (256 aa).

The first 22 residues, 1 to 22, serve as a signal peptide directing secretion; that stretch reads MKSIKRIGLCISLLILSIFVTS. C23 is lipidated: N-palmitoyl cysteine. C23 carries S-diacylglycerol cysteine lipidation.

The protein belongs to the staphylococcal tandem lipoprotein family.

It is found in the cell membrane. This is an uncharacterized protein from Staphylococcus aureus (strain USA300).